The primary structure comprises 969 residues: UvrABC system protein A (969 aa).

An ATP-binding site is contributed by 32–39 (GLSGSGKS). The C4-type zinc-finger motif lies at 258-286 (CPNGHPLAVDDLEPRSFSFNSPYGACPEC). 2 ABC transporter domains span residues 316-599 (WSAG…KDSI) and 619-948 (VDRK…KFLA). 652–659 (GVSGSGKS) contacts ATP. The segment at 751 to 777 (CEACTGDGTIKIEMNFLPDVYVPCEVC) adopts a C4-type zinc-finger fold.

It belongs to the ABC transporter superfamily. UvrA family. In terms of assembly, forms a heterotetramer with UvrB during the search for lesions.

It localises to the cytoplasm. Functionally, the UvrABC repair system catalyzes the recognition and processing of DNA lesions. UvrA is an ATPase and a DNA-binding protein. A damage recognition complex composed of 2 UvrA and 2 UvrB subunits scans DNA for abnormalities. When the presence of a lesion has been verified by UvrB, the UvrA molecules dissociate. This chain is UvrABC system protein A, found in Mycobacterium leprae (strain TN).